Reading from the N-terminus, the 695-residue chain is Elongation factor G 2 (695 aa).

The region spanning 5 to 280 is the tr-type G domain; the sequence is SLYRNIGIFA…AVVDYLPSPT (276 aa). GTP contacts are provided by residues 14-21, 78-82, and 132-135; these read AHVDAGKT, DTPGH, and NKLD.

The protein belongs to the TRAFAC class translation factor GTPase superfamily. Classic translation factor GTPase family. EF-G/EF-2 subfamily.

The protein localises to the cytoplasm. Catalyzes the GTP-dependent ribosomal translocation step during translation elongation. During this step, the ribosome changes from the pre-translocational (PRE) to the post-translocational (POST) state as the newly formed A-site-bound peptidyl-tRNA and P-site-bound deacylated tRNA move to the P and E sites, respectively. Catalyzes the coordinated movement of the two tRNA molecules, the mRNA and conformational changes in the ribosome. In Vibrio cholerae serotype O1 (strain ATCC 39315 / El Tor Inaba N16961), this protein is Elongation factor G 2.